A 429-amino-acid chain; its full sequence is Histidine--tRNA ligase (429 aa).

The protein belongs to the class-II aminoacyl-tRNA synthetase family. Homodimer.

The protein localises to the cytoplasm. The catalysed reaction is tRNA(His) + L-histidine + ATP = L-histidyl-tRNA(His) + AMP + diphosphate + H(+). This chain is Histidine--tRNA ligase, found in Prochlorococcus marinus (strain MIT 9515).